The primary structure comprises 188 residues: Vascular endothelial growth factor A-A (188 aa).

Positions 1–23 (MNLVVYLIQLFLAALLHLSAVKA) are cleaved as a signal peptide. Intrachain disulfides connect C49/C91, C80/C125, and C84/C127. N-linked (GlcNAc...) asparagine glycosylation is present at N98.

The protein belongs to the PDGF/VEGF growth factor family. In terms of assembly, homodimer; disulfide-linked. Isoform VEGF165 binds kdr and kdrl. Predominantly expressed in regions associated with active vascularization. From 15-16 hours post-fertilization (hpf), expressed in the anterior forebrain, the mesoderm underlying and lateral to the anterior hindbrain, the mesoderm underlying and lateral to the posterior hindbrain, and in the ventral medial portions of the somites. By 30-36 hpf, expression in the somites is decreased, while strong expression is observed in the region of the developing glomeruli and in the anterior portion of the pronephric ducts, the pharyngeal arches, and the brain. By 72 hpf, expression remains only in the pronephros region.

It localises to the secreted. Its function is as follows. Growth factor active in angiogenesis, vasculogenesis and endothelial cell growth. Induces endothelial cell proliferation, promotes cell migration, inhibits apoptosis, and induces permeabilization of blood vessels. Required for intersegmental vessel development in the tail during embryogenesis. Acts both upstream of kdr and tie1 to stimulate endothelial cell differentiation, and upstream of gata1 to stimulate hematopoietic cell differentiation. The protein is Vascular endothelial growth factor A-A (vegfaa) of Danio rerio (Zebrafish).